We begin with the raw amino-acid sequence, 362 residues long: Anthranilate phosphoribosyltransferase (362 aa).

5-phospho-alpha-D-ribose 1-diphosphate contacts are provided by residues Gly-96, 99–100, Thr-104, 106–109, 124–132, and Gly-136; these read GD, NIST, and KHGNRAASS. An anthranilate-binding site is contributed by Gly-96. Residue Ser-108 participates in Mg(2+) binding. Position 127 (Asn-127) interacts with anthranilate. Residue Arg-182 coordinates anthranilate. The Mg(2+) site is built by Asp-240 and Glu-241.

It belongs to the anthranilate phosphoribosyltransferase family. Homodimer. It depends on Mg(2+) as a cofactor.

It carries out the reaction N-(5-phospho-beta-D-ribosyl)anthranilate + diphosphate = 5-phospho-alpha-D-ribose 1-diphosphate + anthranilate. It participates in amino-acid biosynthesis; L-tryptophan biosynthesis; L-tryptophan from chorismate: step 2/5. In terms of biological role, catalyzes the transfer of the phosphoribosyl group of 5-phosphorylribose-1-pyrophosphate (PRPP) to anthranilate to yield N-(5'-phosphoribosyl)-anthranilate (PRA). The polypeptide is Anthranilate phosphoribosyltransferase (Rhodococcus opacus (strain B4)).